A 214-amino-acid chain; its full sequence is uncharacterized protein (214 aa).

This is an uncharacterized protein from Rhodobacter capsulatus (Rhodopseudomonas capsulata).